An 81-amino-acid chain; its full sequence is Photosystem I iron-sulfur center (81 aa).

4Fe-4S ferredoxin-type domains lie at 1–31 (MSHT…MVPW) and 37–68 (GQIA…IRVY). 8 residues coordinate [4Fe-4S] cluster: C11, C14, C17, C21, C48, C51, C54, and C58.

As to quaternary structure, the cyanobacterial PSI reaction center is composed of one copy each of PsaA,B,C,D,E,F,I,J,K,L,M and X, and forms trimeric complexes. [4Fe-4S] cluster serves as cofactor.

The protein resides in the cellular thylakoid membrane. The enzyme catalyses reduced [plastocyanin] + hnu + oxidized [2Fe-2S]-[ferredoxin] = oxidized [plastocyanin] + reduced [2Fe-2S]-[ferredoxin]. Apoprotein for the two 4Fe-4S centers FA and FB of photosystem I (PSI); essential for photochemical activity. FB is the terminal electron acceptor of PSI, donating electrons to ferredoxin. The C-terminus interacts with PsaA/B/D and helps assemble the protein into the PSI complex. Required for binding of PsaD and PsaE to PSI. PSI is a plastocyanin/cytochrome c6-ferredoxin oxidoreductase, converting photonic excitation into a charge separation, which transfers an electron from the donor P700 chlorophyll pair to the spectroscopically characterized acceptors A0, A1, FX, FA and FB in turn. This chain is Photosystem I iron-sulfur center, found in Acaryochloris marina (strain MBIC 11017).